The following is a 198-amino-acid chain: Dual specificity protein phosphatase 13B (198 aa).

The Tyrosine-protein phosphatase domain occupies 45–193; the sequence is HINEVWPNLF…LQVLDNRLRR (149 aa). C138 (phosphocysteine intermediate) is an active-site residue.

This sequence belongs to the protein-tyrosine phosphatase family. Non-receptor class dual specificity subfamily. In terms of tissue distribution, most abundantly expressed in the testis.

The catalysed reaction is O-phospho-L-tyrosyl-[protein] + H2O = L-tyrosyl-[protein] + phosphate. The enzyme catalyses O-phospho-L-seryl-[protein] + H2O = L-seryl-[protein] + phosphate. It carries out the reaction O-phospho-L-threonyl-[protein] + H2O = L-threonyl-[protein] + phosphate. Its function is as follows. Dual specificity phosphatase that dephosphorylates MAPK8/JNK and MAPK14/p38, but not MAPK1/ERK2, in vitro. Exhibits intrinsic phosphatase activity towards both phospho-seryl/threonyl and -tyrosyl residues, with similar specific activities in vitro. The protein is Dual specificity protein phosphatase 13B of Mus musculus (Mouse).